The chain runs to 549 residues: MAAKDVKFGDSARKRMVAGVNTLADAVKVTLGPKGRNVVLDKSFGAPTVTKDGVSVAKEIELKDKFENMGAQMVKEVASKTNDEAGDGTTTATVLAQAILNEGLKSVAAGMNPMDLKRGIDKAVIAAVKEIKNISRPCEDSKSIAQVGTISANSDERIGNIIAEAMEKVGKEGVITVEEGSGLEDELDVVEGMQFDRGYLSAYFVNNQDSMSAELEDPFILLVDKKISNIREMLPVLEAVAKSSKPLLVISEDLEGEALATLVVNNMRGIVKVAAVKAPGFGDRRKEMLQDIAILTGGTVISEEVGLNLEGATLDDLGTAKRVVVTKENTTIIDGAGAKSDIEARVAQIRRQIEETSSDYDREKLQERVAKLAGGVAVIKVGAATEVEMKEKKARVEDALHSTRAAVEEGVVPGGGVALVRALQAVSDLAGDNADQDVGINLLRRAMEAPLRQIVANAGGEPSVVVDKVRQGEGAFGYNAGTEAYGDMLEMGILDPAKVTRTALQSAASIAGLMITTECMVSDLPEDDKKGGMPDMGGMGGMGGMGGMM.

Residues Thr-30 to Pro-33, Lys-51, Asp-87 to Thr-91, Gly-415, and Asp-495 each bind ATP.

Belongs to the chaperonin (HSP60) family. In terms of assembly, forms a cylinder of 14 subunits composed of two heptameric rings stacked back-to-back. Interacts with the co-chaperonin GroES.

The protein resides in the cytoplasm. The catalysed reaction is ATP + H2O + a folded polypeptide = ADP + phosphate + an unfolded polypeptide.. Its function is as follows. Together with its co-chaperonin GroES, plays an essential role in assisting protein folding. The GroEL-GroES system forms a nano-cage that allows encapsulation of the non-native substrate proteins and provides a physical environment optimized to promote and accelerate protein folding. In Hahella chejuensis (strain KCTC 2396), this protein is Chaperonin GroEL.